Consider the following 455-residue polypeptide: Dihydrolipoyllysine-residue succinyltransferase component of 2-oxoglutarate dehydrogenase complex, mitochondrial (455 aa).

Residues 1–68 constitute a mitochondrion transit peptide; the sequence is MLSRSRCVSR…RFFRTTAVCK (68 aa). The region spanning 71–145 is the Lipoyl-binding domain; the sequence is VITVKTPAFA…EGGTPLFTLR (75 aa). Residue S82 is modified to Phosphoserine. An N6-lipoyllysine modification is found at K111. The span at 153-173 shows a compositional bias: low complexity; the sequence is KAKPAEAPAAAAPKAEPAVSA. Residues 153–214 are disordered; the sequence is KAKPAEAPAA…KPTAAPPVAE (62 aa). K155 carries the post-translational modification N6-acetyllysine. Residues 174–195 are compositionally biased toward pro residues; it reads VPPPPAASIPTQMPPVPSPPQP. Positions 221–453 are catalytic; sequence LRAEHREKMN…AVEDPRVLLL (233 aa). N6-acetyllysine occurs at positions 269, 274, 275, 279, and 309. Residues H426 and D430 contribute to the active site.

Belongs to the 2-oxoacid dehydrogenase family. In terms of assembly, the 2-oxoglutarate dehydrogenase complex is composed of OGDH (2-oxoglutarate dehydrogenase; E1), DLST (dihydrolipoamide succinyltransferase; E2), DLD (dihydrolipoamide dehydrogenase; E3) and the assembly factor KGD4. It contains multiple copies of the three enzymatic components (E1, E2 and E3). In the nucleus, the 2-oxoglutarate dehydrogenase complex associates with KAT2A. Interacts with ABHD11; this interaction maintains the functional lipoylation of the 2-oxoglutarate dehydrogenase complex. (R)-lipoate is required as a cofactor.

It localises to the mitochondrion matrix. The protein localises to the nucleus. It catalyses the reaction N(6)-[(R)-dihydrolipoyl]-L-lysyl-[protein] + succinyl-CoA = N(6)-[(R)-S(8)-succinyldihydrolipoyl]-L-lysyl-[protein] + CoA. It functions in the pathway amino-acid degradation; L-lysine degradation via saccharopine pathway; glutaryl-CoA from L-lysine: step 6/6. The protein operates within carbohydrate metabolism; tricarboxylic acid cycle. Its function is as follows. Dihydrolipoamide succinyltransferase (E2) component of the 2-oxoglutarate dehydrogenase complex. The 2-oxoglutarate dehydrogenase complex catalyzes the overall conversion of 2-oxoglutarate to succinyl-CoA and CO(2). The 2-oxoglutarate dehydrogenase complex is mainly active in the mitochondrion. A fraction of the 2-oxoglutarate dehydrogenase complex also localizes in the nucleus and is required for lysine succinylation of histones: associates with KAT2A on chromatin and provides succinyl-CoA to histone succinyltransferase KAT2A. This Sus scrofa (Pig) protein is Dihydrolipoyllysine-residue succinyltransferase component of 2-oxoglutarate dehydrogenase complex, mitochondrial.